The chain runs to 204 residues: Bombinin-like peptides 1 (204 aa).

A signal peptide (or 18) is located at residues Met-1–Ala-16. Asn-70 and Asn-133 each carry asparagine amide.

This sequence belongs to the bombinin family. Expressed by the skin glands.

The protein localises to the secreted. Has antimicrobial activity, but no hemolytic activity. Preference on killing Gram-negative non-enteric bacteria. This Bombina orientalis (Oriental fire-bellied toad) protein is Bombinin-like peptides 1.